Reading from the N-terminus, the 178-residue chain is Large ribosomal subunit protein uL6 (178 aa).

This sequence belongs to the universal ribosomal protein uL6 family. In terms of assembly, part of the 50S ribosomal subunit.

Its function is as follows. This protein binds to the 23S rRNA, and is important in its secondary structure. It is located near the subunit interface in the base of the L7/L12 stalk, and near the tRNA binding site of the peptidyltransferase center. The polypeptide is Large ribosomal subunit protein uL6 (Campylobacter lari (strain RM2100 / D67 / ATCC BAA-1060)).